A 907-amino-acid polypeptide reads, in one-letter code: Leucine-rich repeat-containing G-protein coupled receptor 5 (907 aa).

The N-terminal stretch at methionine 1–glycine 21 is a signal peptide. At glycine 22 to tyrosine 553 the chain is on the extracellular side. Residues glycine 33–leucine 64 form the LRRNT domain. Cystine bridges form between cysteine 34-cysteine 40 and cysteine 38-cysteine 52. LRR repeat units follow at residues glycine 44–leucine 64, serine 65–serine 88, leucine 89–glycine 112, tyrosine 114–asparagine 136, leucine 137–glycine 160, histidine 162–serine 184, leucine 185–asparagine 208, leucine 209–glycine 232, leucine 233–leucine 256, serine 257–glycine 279, proline 281–histidine 303, leucine 304–threonine 327, alanine 328–glutamine 350, leucine 351–lysine 375, glutamine 377–glutamine 396, leucine 397–threonine 420, and leucine 421–glycine 444. 2 N-linked (GlcNAc...) asparagine glycosylation sites follow: asparagine 63 and asparagine 77. Asparagine 208 carries N-linked (GlcNAc...) asparagine glycosylation. Residues cysteine 348 and cysteine 373 are joined by a disulfide bond. A disulfide bridge links cysteine 479 with cysteine 541. Asparagine 500 carries N-linked (GlcNAc...) asparagine glycosylation. A helical transmembrane segment spans residues leucine 554 to cysteine 574. One copy of the LRR 18 repeat lies at valine 564–alanine 585. At asparagine 575 to lysine 593 the chain is on the cytoplasmic side. The chain crosses the membrane as a helical span at residues leucine 594–alanine 614. At glycine 615–glutamine 638 the chain is on the extracellular side. Cysteine 637 and cysteine 712 are disulfide-bonded. The helical transmembrane segment at valine 639–alanine 659 threads the bilayer. The Cytoplasmic portion of the chain corresponds to leucine 660–arginine 682. Residues alanine 683–glycine 703 traverse the membrane as a helical segment. The Extracellular portion of the chain corresponds to serine 704–threonine 723. A helical membrane pass occupies residues glycine 724–tyrosine 744. Topologically, residues threonine 745–histidine 767 are cytoplasmic. A helical transmembrane segment spans residues valine 768–serine 788. Residues serine 789–lysine 802 are Extracellular-facing. A glycan (N-linked (GlcNAc...) asparagine) is linked at asparagine 792. The chain crosses the membrane as a helical span at residues phenylalanine 803 to phenylalanine 823. The Cytoplasmic segment spans residues asparagine 824–leucine 907.

The protein belongs to the G-protein coupled receptor 1 family. Identified in a complex composed of RNF43, LGR5 and RSPO1. Also interacts with other R-spondin ligands, including RSPO2, RSPO3 and RSPO4.

Its subcellular location is the cell membrane. It localises to the golgi apparatus. The protein resides in the trans-Golgi network membrane. Its function is as follows. Receptor for R-spondins that potentiates the canonical Wnt signaling pathway and acts as a stem cell marker of the intestinal epithelium and the hair follicle. Upon binding to R-spondins (RSPO1, RSPO2, RSPO3 or RSPO4), associates with phosphorylated LRP6 and frizzled receptors that are activated by extracellular Wnt receptors, triggering the canonical Wnt signaling pathway to increase expression of target genes. In contrast to classical G-protein coupled receptors, does not activate heterotrimeric G-proteins to transduce the signal. Involved in the development and/or maintenance of the adult intestinal stem cells during postembryonic development. This chain is Leucine-rich repeat-containing G-protein coupled receptor 5 (LGR5), found in Bos taurus (Bovine).